The chain runs to 484 residues: Probable autolysin PH (484 aa).

The Peptidase C51 domain occupies 5–148; the sequence is KNQAEKWFDN…YYDDPMYFIR (144 aa). A MurNAc-LAA domain is found at 181–363; that stretch reads IMLVAGHGYN…YSKLIAGAIH (183 aa). The SH3b domain occupies 402-472; it reads KETGYYTVAN…IATGEVDKAG (71 aa).

It carries out the reaction Hydrolyzes the link between N-acetylmuramoyl residues and L-amino acid residues in certain cell-wall glycopeptides.. Functionally, has weak lytic activity toward S.aureus cells. Full-length protein has no activity, but fusion of the Peptidase C51 domain to the lysostaphin SH3 cell wall binding domain yields an active chimeric enzyme, suggesting that PH may be functional. The protein is Probable autolysin PH of Staphylococcus aureus (strain NCTC 8325 / PS 47).